The sequence spans 405 residues: Ubiquitin-like modifier-activating enzyme 5 (405 aa).

The segment at 1–44 (MATVEELQTRVKQLEEELERERTRNRGGTDGGGGRKKIDQMSSE) is disordered. A compositionally biased stretch (basic and acidic residues) spans 7–24 (LQTRVKQLEEELERERTR). Positions 81, 102, 125, 148, and 182 each coordinate ATP. 2 residues coordinate Zn(2+): Cys224 and Cys227. Cys248 (glycyl thioester intermediate) is an active-site residue. 2 residues coordinate Zn(2+): Cys301 and Cys306. The interval 346 to 377 (AETTEEELKAASHGHVPELVEGVHVAYVRPMT) is linker. The short motif at 390–405 (DDQESLEDLMAKMKSI) is the UFC1-binding sequence (UFC) element.

Belongs to the ubiquitin-activating E1 family. UBA5 subfamily. Homodimer; homodimerization is required for UFM1 activation. Interacts (via UIS motif) with UFM1; binds UFM1 via a trans-binding mechanism in which UFM1 interacts with distinct sites in both subunits of the UBA5 homodimer. Interacts (via C-terminus) with UFC1.

Its subcellular location is the cytoplasm. The protein localises to the nucleus. It is found in the endoplasmic reticulum membrane. It localises to the golgi apparatus. E1-like enzyme which specifically catalyzes the first step in ufmylation. Activates UFM1 by first adenylating its C-terminal glycine residue with ATP, and thereafter linking this residue to the side chain of a cysteine residue in E1, yielding a UFM1-E1 thioester and free AMP. Activates UFM1 via a trans-binding mechanism, in which UFM1 interacts with distinct sites in both subunits of the UBA5 homodimer. Trans-binding also promotes stabilization of the UBA5 homodimer, and enhances ATP-binding. Transfer of UFM1 from UBA5 to the E2-like enzyme UFC1 also takes place using a trans mechanism. This chain is Ubiquitin-like modifier-activating enzyme 5, found in Branchiostoma floridae (Florida lancelet).